A 174-amino-acid polypeptide reads, in one-letter code: Thiol-disulfide oxidoreductase ResA (174 aa).

The helical; Signal-anchor for type II membrane protein transmembrane segment at 11 to 30 threads the bilayer; it reads TAILLVLLAAIGYTIYTNFF. Residues 36-174 form the Thioredoxin domain; the sequence is VAVGSTAPDF…IERHLESIKP (139 aa). The cysteines at positions 74 and 77 are disulfide-linked.

Belongs to the thioredoxin family. ResA subfamily.

It is found in the cell membrane. It functions in the pathway protein modification; cytochrome c assembly. Functionally, thiol-disulfide oxidoreductase which is required in disulfide reduction during c-type cytochrome synthesis. May accept reducing equivalents from CcdA, leading to breakage of disulfide bonds in apocytochrome c; following this reduction heme can be covalently attached. This Geobacillus kaustophilus (strain HTA426) protein is Thiol-disulfide oxidoreductase ResA.